We begin with the raw amino-acid sequence, 159 residues long: MDKPRKENEEEPQSAPKTDEERPPVEHSPEKQSPEEQSSEEQSSEEEFFPEELLPELLPEMLLSEERPPQEGLSRKDLFEGRPPMEQPPCGVGKHKLEEGSFKERLARSRPQFRGDIHGRNLSNEEMIQAADELEEMKRVRNKLMIMHWKAKRSRPYPI.

The interval 1-97 is disordered; the sequence is MDKPRKENEE…PPCGVGKHKL (97 aa). A compositionally biased stretch (basic and acidic residues) spans 17–34; that stretch reads KTDEERPPVEHSPEKQSP. 6 positions are modified to phosphoserine: S28, S33, S38, S39, S43, and S44. Acidic residues predominate over residues 37 to 54; the sequence is QSSEEQSSEEEFFPEELL. Residues 64–80 are compositionally biased toward basic and acidic residues; sequence SEERPPQEGLSRKDLFE.

This sequence belongs to the TFS-II family. TFA subfamily. Phosphorylation of Ser-38 and Ser-39 is critical for transcriptional repression. In terms of tissue distribution, expressed in all tissues examined. Highly expressed in heart, ovary, prostate and skeletal muscle. Moderately expressed in brain, placenta, testis and small intestine. Weakly expressed in lung, liver and spleen. Expressed in several cancer cell lines.

It is found in the nucleus. May be involved in transcriptional regulation. Modulates various viral and cellular promoters in a promoter context-dependent manner. For example, transcription from the FOS promoter is increased, while Rous sarcoma virus (RSV) long terminal repeat (LTR) promoter activity is repressed. Does not bind DNA directly. This chain is Transcription elongation factor A protein-like 1, found in Homo sapiens (Human).